The primary structure comprises 185 residues: Elongation factor P (185 aa).

The protein belongs to the elongation factor P family.

The protein resides in the cytoplasm. Its pathway is protein biosynthesis; polypeptide chain elongation. Its function is as follows. Involved in peptide bond synthesis. Stimulates efficient translation and peptide-bond synthesis on native or reconstituted 70S ribosomes in vitro. Probably functions indirectly by altering the affinity of the ribosome for aminoacyl-tRNA, thus increasing their reactivity as acceptors for peptidyl transferase. This Rippkaea orientalis (strain PCC 8801 / RF-1) (Cyanothece sp. (strain PCC 8801)) protein is Elongation factor P.